The following is a 54-amino-acid chain: SAALAGTIIAGASLGFQILDKVLGELGKVSRKIAIGVDNESIGSNTAWTXXXXW.

The segment at 3-12 is plays an important role in the hemolytic activity; the sequence is ALAGTIIAGA. The interval 11–30 is N-terminal region; sequence GASLGFQILDKVLGELGKVS.

Belongs to the actinoporin family. Sea anemone subfamily. In terms of assembly, octamer or nonamer in membranes. Monomer in the soluble state.

Its subcellular location is the secreted. The protein localises to the nematocyst. It is found in the target cell membrane. Pore-forming protein that forms cations-selective hydrophilic pores of around 1 nm and causes cytolysis. Pore formation is a multi-step process that involves specific recognition of membrane sphingomyelin (but neither cholesterol nor phosphatidylcholine) using aromatic rich region and adjacent phosphocholine (POC) binding site, firm binding to the membrane (mainly driven by hydrophobic interactions) accompanied by the transfer of the N-terminal region to the lipid-water interface and finally pore formation after oligomerization of monomers. This is Hemolytic toxin from Heteractis magnifica (Magnificent sea anemone).